The chain runs to 695 residues: Calcium-dependent serine proteinase (695 aa).

Positions 1-21 (MGKSSEAWCIVLFSVFASFSA) are cleaved as a signal peptide. Residues 22–136 (EPTMHGEILS…TGFAAYYAAI (115 aa)) enclose the CUB 1 domain. 4 disulfides stabilise this stretch: C71-C89, C141-C153, C149-C162, and C164-C177. An EGF-like; calcium-binding domain is found at 137–178 (DVNECTDFTDVPCSHFCNNFIGGYFCSCPPEYFLHDDMRNCG). N155 carries the post-translational modification (3R)-3-hydroxyasparagine. N-linked (GlcNAc...) asparagine glycosylation occurs at N180. 6 cysteine pairs are disulfide-bonded: C181–C208, C240–C257, C300–C347, C327–C360, C365–C410, and C392–C428. In terms of domain architecture, CUB 2 spans 181–296 (CSGNVFTALI…KGWKLRYHGD (116 aa)). 2 Sushi domains span residues 298 to 362 (IPCP…RCQP) and 363 to 430 (VDCG…KCVP). N-linked (GlcNAc...) asparagine glycosylation is present at N413. Residues 445–687 (IFGGFPAKIQ…YKDWILQTMQ (243 aa)) form the Peptidase S1 domain. Residues H482 and D536 each act as charge relay system in the active site. 2 disulfide bridges follow: C602–C625 and C634–C666. The active-site Charge relay system is S638.

This sequence belongs to the peptidase S1 family. Heterodimer, consisting of heavy and light chains with disulfide bonds. The heavy chain is expected to be a regulatory subunit and the light chain contains the catalytic site. In terms of processing, the iron and 2-oxoglutarate dependent 3-hydroxylation of aspartate and asparagine is (R) stereospecific within EGF domains.

Its subcellular location is the secreted. It is found in the extracellular space. The protein resides in the extracellular matrix. Functionally, capable of degrading extracellular matrix proteins. CASP degrades type I and IV collagen and fibronectin in the presence of calcium. This chain is Calcium-dependent serine proteinase, found in Mesocricetus auratus (Golden hamster).